A 386-amino-acid chain; its full sequence is Protein lin-8 (386 aa).

The interval 175-285 (LGLEARRASK…FSQQYGGGGS (111 aa)) is sufficient for interaction with lin-35. A disordered region spans residues 212-240 (EEPYEETGSNWSDPAPEPSQSKSQSPEAK). Over residues 229–240 (PSQSKSQSPEAK) the composition is skewed to low complexity.

The protein belongs to the lin-8 family. As to quaternary structure, interacts with lin-35 (via C-terminus). In terms of tissue distribution, widely expressed throughout development, with particularly prominent expression in the germline and in neuronal nuclei of the head (at protein level).

The protein localises to the nucleus. Functionally, acts as a synthetic multivulva class A (synMuvA) protein and redundantly inhibits lin-3/EGF expression to prevent inappropriate vulva induction. This Caenorhabditis elegans protein is Protein lin-8.